The sequence spans 312 residues: Olfactory receptor OR51C1 (312 aa).

The Extracellular portion of the chain corresponds to 1–26 (MGSNITSTSIIFLLTGVPGLEAFHTW). The chain crosses the membrane as a helical span at residues 27 to 47 (ISIPFCFLSVTALLGNSLILF). Residues 48–66 (ATITQPSLHEPMYYFLSML) lie on the Cytoplasmic side of the membrane. Residues 67 to 87 (SATDLGLSISTLVTMLSIFWF) traverse the membrane as a helical segment. The Extracellular segment spans residues 88–99 (NVREISFNACLS). Cys-97 and Cys-179 are joined by a disulfide. Residues 100-120 (HMFFIKFFTVMESSVLLAMAF) form a helical membrane-spanning segment. The Cytoplasmic portion of the chain corresponds to 121–143 (DRFVAVSNPLRYAMILTDSRIAQ). A helical membrane pass occupies residues 144–164 (IGVASVIRGLLMLTPMVALLI). The Extracellular portion of the chain corresponds to 165-201 (RLSYCHSQVLHHSYCYHPDVMKLSCTDTRINSAVGLT). Residues 202 to 222 (AMFSTVGVDLLLILLSYVLII) form a helical membrane-spanning segment. Residues 223–240 (RTVLSVASPEERKETFST) lie on the Cytoplasmic side of the membrane. Residues 241–261 (CVSHIVAFAIYYIPLISLSIV) traverse the membrane as a helical segment. The Extracellular portion of the chain corresponds to 262–273 (HRFGKQAPAYVH). A helical transmembrane segment spans residues 274 to 294 (TMIANTYLLISPLMNPVIYSV). Residues 295–312 (KTKQIRRAVIKILHSKET) lie on the Cytoplasmic side of the membrane.

It belongs to the G-protein coupled receptor 1 family.

The protein resides in the membrane. Odorant receptor. This Homo sapiens (Human) protein is Olfactory receptor OR51C1.